We begin with the raw amino-acid sequence, 568 residues long: Pyruvate carboxylase subunit B (568 aa).

The 261-residue stretch at 4–264 (IKVVETAFRD…DTGLDLEILK (261 aa)) folds into the Pyruvate carboxyltransferase domain. Substrate-binding positions include 12 to 16 (RDAHQ) and R83. Residue D13 coordinates a divalent metal cation. Residues K174, H203, and H205 each coordinate a divalent metal cation. The residue at position 174 (K174) is an N6-carboxylysine. T339 serves as a coordination point for substrate. Residues 493-568 (PEPVDVEGAV…ETGDIIMVIK (76 aa)) enclose the Biotinyl-binding domain. K534 is modified (N6-biotinyllysine).

Heterooctamer of four A and four B subunits. The cofactor is Mg(2+). Mn(2+) serves as cofactor. Co(2+) is required as a cofactor.

It carries out the reaction hydrogencarbonate + pyruvate + ATP = oxaloacetate + ADP + phosphate + H(+). Its activity is regulated as follows. Inhibited by ADP and alpha-ketoglutarate. Functionally, pyruvate carboxylase catalyzes a 2-step reaction, involving the ATP-dependent carboxylation of the covalently attached biotin in the first step and the transfer of the carboxyl group to pyruvate in the second. The polypeptide is Pyruvate carboxylase subunit B (pycB) (Methanothermobacter thermautotrophicus (strain ATCC 29096 / DSM 1053 / JCM 10044 / NBRC 100330 / Delta H) (Methanobacterium thermoautotrophicum)).